A 241-amino-acid polypeptide reads, in one-letter code: Phosphoribosyl isomerase A (241 aa).

D11 functions as the Proton acceptor in the catalytic mechanism. The active-site Proton donor is the D130.

This sequence belongs to the HisA/HisF family.

The protein resides in the cytoplasm. It catalyses the reaction 1-(5-phospho-beta-D-ribosyl)-5-[(5-phospho-beta-D-ribosylamino)methylideneamino]imidazole-4-carboxamide = 5-[(5-phospho-1-deoxy-D-ribulos-1-ylimino)methylamino]-1-(5-phospho-beta-D-ribosyl)imidazole-4-carboxamide. The catalysed reaction is N-(5-phospho-beta-D-ribosyl)anthranilate = 1-(2-carboxyphenylamino)-1-deoxy-D-ribulose 5-phosphate. It participates in amino-acid biosynthesis; L-histidine biosynthesis; L-histidine from 5-phospho-alpha-D-ribose 1-diphosphate: step 4/9. Its pathway is amino-acid biosynthesis; L-tryptophan biosynthesis; L-tryptophan from chorismate: step 3/5. Its function is as follows. Involved in both the histidine and tryptophan biosynthetic pathways. This chain is Phosphoribosyl isomerase A, found in Streptomyces griseus subsp. griseus (strain JCM 4626 / CBS 651.72 / NBRC 13350 / KCC S-0626 / ISP 5235).